We begin with the raw amino-acid sequence, 184 residues long: Non-specific lipid transfer protein GPI-anchored 6 (184 aa).

A signal peptide spans M1 to S24. 4 disulfide bridges follow: C33–C74, C43–C58, C59–C101, and C72–C111. The segment at N138–V158 is disordered. S160 carries GPI-anchor amidated serine lipidation. A propeptide spans N161–F184 (removed in mature form).

Belongs to the plant LTP family. Preferentially expressed in the shoot apical meristem and the root meristem. Also present in the ovules and developing embryos. Observed in cotyledons, hypocotyls, flowers, leaves and siliques. Up-regulated in the epidermis of stems.

The protein localises to the cell membrane. Its function is as follows. Lipid transfer protein involved in seed and ovule maturation and development, probably by regulating the fatty acids homeostasis during suberin and sporopollenin biosynthesis or deposition. Contributes to pre-invasive defense against some non-host powdery mildew pathogens by preventing the penetration of the epidermal cell wall by the fungal agents (e.g. Blumeria graminis f. sp. hordei (Bgh)). The chain is Non-specific lipid transfer protein GPI-anchored 6 from Arabidopsis thaliana (Mouse-ear cress).